The following is a 233-amino-acid chain: MSKRLQVFPWITILFYTSKSQYWNYMTIPCTPTVGYGSHNISLHPLNNSLFQDDVFEWYIDKPMVTNKLCLYQSNERIKSNLDSPNIMWQCTDNRTLILMNLTTTYSRNYYFQSFKYLGQGVPKPNNLCYNVSVHFTHQTHCHTTTSSLYPPTSVHDSLEISQSFTSTNFTHTAVHYAAGNVEAQHDTATSHTMWIIPLVIVITIIVLICFKFPQKAWNKFTQYRYSGMLAAA.

Residues 1–20 (MSKRLQVFPWITILFYTSKS) form the signal peptide. 5 N-linked (GlcNAc...) asparagine; by host glycosylation sites follow: Asn-40, Asn-94, Asn-101, Asn-131, and Asn-169. Residues 194-214 (MWIIPLVIVITIIVLICFKFP) form a helical membrane-spanning segment.

Belongs to the HHV-5 UL9 family.

Its subcellular location is the host membrane. The chain is Membrane glycoprotein UL9 (UL9) from Homo sapiens (Human).